A 69-amino-acid chain; its full sequence is Cold shock-like protein CspE (69 aa).

The CSD domain maps to 6–66 (GNVKWFNESK…GAKGPSAANV (61 aa)).

Its subcellular location is the cytoplasm. The sequence is that of Cold shock-like protein CspE (cspE) from Buchnera aphidicola subsp. Acyrthosiphon pisum (strain APS) (Acyrthosiphon pisum symbiotic bacterium).